Consider the following 329-residue polypeptide: Beta-tectorin (329 aa).

The N-terminal stretch at 1–17 (MVVRAFVLLALFAEASA) is a signal peptide. Positions 19–283 (SCTPNKADVI…LSCPVNCDKR (265 aa)) constitute a ZP domain. 4 N-linked (GlcNAc...) asparagine glycosylation sites follow: asparagine 80, asparagine 104, asparagine 116, and asparagine 145. Cysteines 204 and 264 form a disulfide. Residue alanine 305 is the site of GPI-anchor amidated alanine attachment. The propeptide at 306–329 (FSGLCDFSDVLLHLILMLGTWAVL) is removed in mature form.

In terms of assembly, may form homomeric filament after self-association or heteromeric filament after association with alpha-tectorin. Interacts with CEACAM16. The presence of a hydrophobic C-terminus preceded by a potential cleavage site strongly suggests that tectorins are synthesized as glycosylphosphatidylinositol-linked, membrane-bound precursors. Tectorins are targeted to the apical surface of the inner ear epithelia by the lipid and proteolytically released into the extracellular compartment.

It is found in the cell membrane. Its subcellular location is the secreted. The protein resides in the extracellular space. It localises to the extracellular matrix. One of the major non-collagenous components of the tectorial membrane. The tectorial membrane is an extracellular matrix of the inner ear that covers the neuroepithelium of the cochlea and contacts the stereocilia bundles of specialized sensory hair cells. Sound induces movement of these hair cells relative to the tectorial membrane, deflects the stereocilia and leads to fluctuations in hair-cell membrane potential, transducing sound into electrical signals. The polypeptide is Beta-tectorin (Tectb) (Mus musculus (Mouse)).